We begin with the raw amino-acid sequence, 380 residues long: Cytochrome b (380 aa).

The next 4 membrane-spanning stretches (helical) occupy residues 34–54 (FGSL…LLAM), 78–99 (WLIR…YLHI), 114–134 (WNTG…GYVL), and 179–199 (FFAL…IHLT). 2 residues coordinate heme b: H84 and H98. Heme b-binding residues include H183 and H197. H202 provides a ligand contact to a ubiquinone. Transmembrane regions (helical) follow at residues 227–247 (LKDI…ALFS), 289–309 (LGGV…PFLH), 321–341 (LSQL…WVGS), and 348–368 (FIII…ILFP).

Belongs to the cytochrome b family. In terms of assembly, the cytochrome bc1 complex contains 11 subunits: 3 respiratory subunits (MT-CYB, CYC1 and UQCRFS1), 2 core proteins (UQCRC1 and UQCRC2) and 6 low-molecular weight proteins (UQCRH/QCR6, UQCRB/QCR7, UQCRQ/QCR8, UQCR10/QCR9, UQCR11/QCR10 and a cleavage product of UQCRFS1). This cytochrome bc1 complex then forms a dimer. The cofactor is heme b.

It localises to the mitochondrion inner membrane. Functionally, component of the ubiquinol-cytochrome c reductase complex (complex III or cytochrome b-c1 complex) that is part of the mitochondrial respiratory chain. The b-c1 complex mediates electron transfer from ubiquinol to cytochrome c. Contributes to the generation of a proton gradient across the mitochondrial membrane that is then used for ATP synthesis. This Macronectes halli (Hall's giant petrel) protein is Cytochrome b (MT-CYB).